A 368-amino-acid chain; its full sequence is Cobalt-precorrin-5B C(1)-methyltransferase (368 aa).

It belongs to the CbiD family.

It catalyses the reaction Co-precorrin-5B + S-adenosyl-L-methionine = Co-precorrin-6A + S-adenosyl-L-homocysteine. The protein operates within cofactor biosynthesis; adenosylcobalamin biosynthesis; cob(II)yrinate a,c-diamide from sirohydrochlorin (anaerobic route): step 6/10. Functionally, catalyzes the methylation of C-1 in cobalt-precorrin-5B to form cobalt-precorrin-6A. The chain is Cobalt-precorrin-5B C(1)-methyltransferase from Brucella abortus (strain S19).